The following is a 205-amino-acid chain: Small ribosomal subunit protein uS7 (205 aa).

The protein belongs to the universal ribosomal protein uS7 family. As to quaternary structure, part of the 30S ribosomal subunit.

One of the primary rRNA binding proteins, it binds directly to 16S rRNA where it nucleates assembly of the head domain of the 30S subunit. Is located at the subunit interface close to the decoding center. The protein is Small ribosomal subunit protein uS7 of Aeropyrum pernix (strain ATCC 700893 / DSM 11879 / JCM 9820 / NBRC 100138 / K1).